A 78-amino-acid chain; its full sequence is Putative membrane protein insertion efficiency factor (78 aa).

This sequence belongs to the UPF0161 family.

It localises to the cell membrane. Could be involved in insertion of integral membrane proteins into the membrane. This Bacillus mycoides (strain KBAB4) (Bacillus weihenstephanensis) protein is Putative membrane protein insertion efficiency factor.